Consider the following 225-residue polypeptide: Leucyl/phenylalanyl-tRNA--protein transferase (225 aa).

It belongs to the L/F-transferase family.

Its subcellular location is the cytoplasm. It catalyses the reaction N-terminal L-lysyl-[protein] + L-leucyl-tRNA(Leu) = N-terminal L-leucyl-L-lysyl-[protein] + tRNA(Leu) + H(+). It carries out the reaction N-terminal L-arginyl-[protein] + L-leucyl-tRNA(Leu) = N-terminal L-leucyl-L-arginyl-[protein] + tRNA(Leu) + H(+). The enzyme catalyses L-phenylalanyl-tRNA(Phe) + an N-terminal L-alpha-aminoacyl-[protein] = an N-terminal L-phenylalanyl-L-alpha-aminoacyl-[protein] + tRNA(Phe). Functions in the N-end rule pathway of protein degradation where it conjugates Leu, Phe and, less efficiently, Met from aminoacyl-tRNAs to the N-termini of proteins containing an N-terminal arginine or lysine. The sequence is that of Leucyl/phenylalanyl-tRNA--protein transferase from Rhodopseudomonas palustris (strain TIE-1).